We begin with the raw amino-acid sequence, 231 residues long: MKNLILILPLLMLTGCVGDPADALTGPRLSPVGSGLRTQADPIPVTPRMRTPVSYRSTWDDGTDLYRDPRARRTGDVVTVIISMQDKAKLDNKTGRSRDSQIKFGLDWLMDVAGWADKGQTTANLSTNTQIKGNGQIDRTEDIKLSIAAIVTDVLPNGNMMISGSQEFRVNTEMRVLNVGGIVRPRDISRTNTISYEKIAEARVSYGGQGNLSDVQQPGWGHRIYDAVAPF.

The signal sequence occupies residues 1–15; it reads MKNLILILPLLMLTG. The N-palmitoyl cysteine moiety is linked to residue C16. The S-diacylglycerol cysteine moiety is linked to residue C16. The disordered stretch occupies residues 30–54; it reads SPVGSGLRTQADPIPVTPRMRTPVS.

It belongs to the FlgH family. In terms of assembly, the basal body constitutes a major portion of the flagellar organelle and consists of four rings (L,P,S, and M) mounted on a central rod.

The protein localises to the cell outer membrane. It is found in the bacterial flagellum basal body. Assembles around the rod to form the L-ring and probably protects the motor/basal body from shearing forces during rotation. The protein is Flagellar L-ring protein 2 of Bradyrhizobium diazoefficiens (strain JCM 10833 / BCRC 13528 / IAM 13628 / NBRC 14792 / USDA 110).